The sequence spans 134 residues: Z-ring associated protein G (134 aa).

The chain crosses the membrane as a helical span at residues E7–V27. Positions A107–N134 are disordered. Basic and acidic residues predominate over residues S111–S120.

The protein belongs to the ZapG family.

The protein localises to the cell inner membrane. Functionally, involved in cell division, cell envelope biogenesis and cell shape maintenance. The chain is Z-ring associated protein G from Haemophilus influenzae (strain ATCC 51907 / DSM 11121 / KW20 / Rd).